The chain runs to 207 residues: Uracil phosphoribosyltransferase (207 aa).

5-phospho-alpha-D-ribose 1-diphosphate contacts are provided by residues Arg-77, Arg-102, and 129-137 (DPMLATGGS). Uracil-binding positions include Ile-192 and 197–199 (GDA). Asp-198 lines the 5-phospho-alpha-D-ribose 1-diphosphate pocket.

The protein belongs to the UPRTase family. Requires Mg(2+) as cofactor.

The enzyme catalyses UMP + diphosphate = 5-phospho-alpha-D-ribose 1-diphosphate + uracil. The protein operates within pyrimidine metabolism; UMP biosynthesis via salvage pathway; UMP from uracil: step 1/1. Allosterically activated by GTP. Catalyzes the conversion of uracil and 5-phospho-alpha-D-ribose 1-diphosphate (PRPP) to UMP and diphosphate. The protein is Uracil phosphoribosyltransferase of Mycoplasma capricolum subsp. capricolum (strain California kid / ATCC 27343 / NCTC 10154).